The primary structure comprises 843 residues: Glycogen phosphorylase, muscle form (843 aa).

Position 2 is an N-acetylserine (Ser-2). At Ser-15 the chain carries Phosphoserine; by PHK; in form phosphorylase A. AMP contacts are provided by Asp-43 and Tyr-76. 2 positions are modified to phosphotyrosine: Tyr-204 and Tyr-227. 310 to 319 serves as a coordination point for AMP; that stretch reads RRFKSSKFGC. Residue Ser-430 is modified to Phosphoserine. Tyr-473 bears the Phosphotyrosine mark. Ser-514 is subject to Phosphoserine. Lys-681 is subject to N6-(pyridoxal phosphate)lysine. Residues Ser-747 and Ser-748 each carry the phosphoserine modification.

Belongs to the glycogen phosphorylase family. As to quaternary structure, homodimer. Homotetramer; to form the enzymatically active phosphorylase A. Pyridoxal 5'-phosphate serves as cofactor. Post-translationally, phosphorylation of Ser-15 converts phosphorylase B (unphosphorylated) to phosphorylase A.

The enzyme catalyses [(1-&gt;4)-alpha-D-glucosyl](n) + phosphate = [(1-&gt;4)-alpha-D-glucosyl](n-1) + alpha-D-glucose 1-phosphate. Its activity is regulated as follows. Allosterically regulated through the non-covalent binding of metabolites, being activated by AMP and inhibited by ATP, ADP, and glucose-6-phosphate. The activity is also controlled by post-translational modifications including phosphorylation. Its function is as follows. Allosteric enzyme that catalyzes the rate-limiting step in glycogen catabolism, the phosphorolytic cleavage of glycogen to produce glucose-1-phosphate, and plays a central role in maintaining cellular and organismal glucose homeostasis. The polypeptide is Glycogen phosphorylase, muscle form (Oryctolagus cuniculus (Rabbit)).